The primary structure comprises 130 residues: UPF0251 protein MmarC6_0272 (130 aa).

This sequence belongs to the UPF0251 family.

The chain is UPF0251 protein MmarC6_0272 from Methanococcus maripaludis (strain C6 / ATCC BAA-1332).